Reading from the N-terminus, the 207-residue chain is Thiamine-phosphate synthase (207 aa).

4-amino-2-methyl-5-(diphosphooxymethyl)pyrimidine-binding positions include 36 to 40 (QLRLK) and asparagine 68. Positions 69 and 88 each coordinate Mg(2+). Threonine 107 contributes to the 4-amino-2-methyl-5-(diphosphooxymethyl)pyrimidine binding site. 134–136 (TGT) provides a ligand contact to 2-[(2R,5Z)-2-carboxy-4-methylthiazol-5(2H)-ylidene]ethyl phosphate. A 4-amino-2-methyl-5-(diphosphooxymethyl)pyrimidine-binding site is contributed by lysine 137. 2-[(2R,5Z)-2-carboxy-4-methylthiazol-5(2H)-ylidene]ethyl phosphate is bound at residue glycine 164.

This sequence belongs to the thiamine-phosphate synthase family. The cofactor is Mg(2+).

It catalyses the reaction 2-[(2R,5Z)-2-carboxy-4-methylthiazol-5(2H)-ylidene]ethyl phosphate + 4-amino-2-methyl-5-(diphosphooxymethyl)pyrimidine + 2 H(+) = thiamine phosphate + CO2 + diphosphate. It carries out the reaction 2-(2-carboxy-4-methylthiazol-5-yl)ethyl phosphate + 4-amino-2-methyl-5-(diphosphooxymethyl)pyrimidine + 2 H(+) = thiamine phosphate + CO2 + diphosphate. The catalysed reaction is 4-methyl-5-(2-phosphooxyethyl)-thiazole + 4-amino-2-methyl-5-(diphosphooxymethyl)pyrimidine + H(+) = thiamine phosphate + diphosphate. It functions in the pathway cofactor biosynthesis; thiamine diphosphate biosynthesis; thiamine phosphate from 4-amino-2-methyl-5-diphosphomethylpyrimidine and 4-methyl-5-(2-phosphoethyl)-thiazole: step 1/1. Its function is as follows. Condenses 4-methyl-5-(beta-hydroxyethyl)thiazole monophosphate (THZ-P) and 2-methyl-4-amino-5-hydroxymethyl pyrimidine pyrophosphate (HMP-PP) to form thiamine monophosphate (TMP). The protein is Thiamine-phosphate synthase of Rhodospirillum centenum (strain ATCC 51521 / SW).